The primary structure comprises 1708 residues: Rapamycin-insensitive companion of mTOR (1708 aa).

The segment at 1–789 (MAAIGRGRSL…DKANLHALIQ (789 aa)) is interaction with NBN. 3 positions are modified to phosphoserine: Ser21, Ser35, and Ser265. Lys274 participates in a covalent cross-link: Glycyl lysine isopeptide (Lys-Gly) (interchain with G-Cter in ubiquitin). Residues 521–570 (LKDTEEALLINLRDSQVLQHKENLDWDWNLIGTILKWPNVNLRNYKDEQL) form a ribosome-binding domain region. The ATP site is built by Asn543, Arg572, and Arg576. A compositionally biased stretch (low complexity) spans 1021–1043 (TLSLNSESTSSRHNSESESAPSS). The disordered stretch occupies residues 1021-1045 (TLSLNSESTSSRHNSESESAPSSMF). 2 positions are modified to N6-acetyllysine: Lys1092 and Lys1095. Disordered regions lie at residues 1101–1198 (SLTL…ENTS) and 1218–1247 (SFNTDTTTSGISSMSSSPSRETVAVDPTAM). At Thr1103 the chain carries Phosphothreonine. Lys1116, Lys1119, and Lys1125 each carry N6-acetyllysine. Phosphothreonine; by RPS6KB1 is present on Thr1135. Phosphoserine is present on Ser1138. The span at 1147 to 1158 (FTSSSAQKSLQL) shows a compositional bias: polar residues. Phosphoserine is present on residues Ser1161, Ser1218, and Ser1234. Low complexity predominate over residues 1221–1239 (TDTTTSGISSMSSSPSRET). Thr1270 bears the Phosphothreonine mark. Phosphoserine is present on residues Ser1273, Ser1277, Ser1281, and Ser1283. Thr1294 carries the phosphothreonine modification. Ser1301 and Ser1312 each carry phosphoserine. Thr1331 is subject to Phosphothreonine. Phosphoserine occurs at positions 1345 and 1352. Thr1375 is modified (phosphothreonine). Position 1384 is a phosphoserine (Ser1384). Tyr1385 is modified (phosphotyrosine). Ser1387, Ser1395, and Ser1410 each carry phosphoserine. Positions 1514, 1519, and 1522 each coordinate Zn(2+). A phosphoserine mark is found at Ser1570, Ser1573, Ser1576, and Ser1591. Cys1651 serves as a coordination point for Zn(2+).

This sequence belongs to the RICTOR family. In terms of assembly, component of the mechanistic target of rapamycin complex 2 (mTORC2), consisting in two heterotretramers composed of MTOR, MLST8, RICTOR and MAPKAP1/SIN1. The mTORC2 core complex associates with PRR5/PROTOR1 and/or PRR5L/PROTOR2. Contrary to mTORC1, mTORC2 does not bind to and is not sensitive to FKBP12-rapamycin. Binds directly to MTOR and PRR5 within the TORC2 complex; interaction with MTOR is enhanced by deubiquitination of RICTOR by USP9X. Interaction with MAPKAP1 is not enhanced by RICTOR deubiquitination by USP9X. Interacts with CCDC28B. Interacts with NBN. Interacts with SIK3. Interacts with NCKAP1L. Interacts with ARMH4 (via cytoplasmic tail); this interaction bridges ARMH4 to the mTORC2 complex and inhibits the mTORC2 kinase activity. Interacts with UBXN2A. Interacts with TSPAN8. Phosphorylated by MTOR; when part of mTORC2. Phosphorylated at Thr-1135 by RPS6KB1 downstream of the mTORC1 complex: phosphorylation of RICTOR inhibits mTORC2 signaling by creating a binding site for 14-3-3 proteins. Phosphorylated at Ser-1234 by GSK3B in response to endoplasmic stress, inhibiting mTORC2 signaling. Post-translationally, ubiquitinated by the SCF(FBXW7) complex, leading to its degradation by the proteasome. Deubiquitinated by USP9X; deubiquitination stabilizes RICTOR and enhances its binding to MTOR, thus promoting mTORC2 complex assembly. In terms of processing, acetylated by EP300/p300 in response to glucose, leading to activate the mTORC2 complex. Acetylation by BLOC1S1/GCN5L1 in response to hypotoxic stress protects RICTOR against ubiquitination and subsequent degradation by the proteasome. Highest levels in liver and brain with expression also detected in heart, muscle, spleen and kidney (at protein level).

The protein resides in the cell membrane. It is found in the endoplasmic reticulum membrane. Its subcellular location is the lysosome membrane. Component of the mechanistic target of rapamycin complex 2 (mTORC2), which transduces signals from growth factors to pathways involved in proliferation, cytoskeletal organization, lipogenesis and anabolic output. In response to growth factors, mTORC2 phosphorylates and activates AGC protein kinase family members, including AKT (AKT1, AKT2 and AKT3), PKC (PRKCA, PRKCB and PRKCE) and SGK1. In contrast to mTORC1, mTORC2 is nutrient-insensitive. Within the mTORC2 complex, RICTOR probably acts as a molecular adapter. RICTOR is responsible for the FKBP12-rapamycin-insensitivity of mTORC2. mTORC2 plays a critical role in AKT1 activation by mediating phosphorylation of different sites depending on the context, such as 'Thr-450', 'Ser-473', 'Ser-477' or 'Thr-479', facilitating the phosphorylation of the activation loop of AKT1 on 'Thr-308' by PDPK1/PDK1 which is a prerequisite for full activation. mTORC2 catalyzes the phosphorylation of SGK1 at 'Ser-422' and of PRKCA on 'Ser-657'. The mTORC2 complex also phosphorylates various proteins involved in insulin signaling, such as FBXW8 and IGF2BP1. mTORC2 acts upstream of Rho GTPases to regulate the actin cytoskeleton, probably by activating one or more Rho-type guanine nucleotide exchange factors. mTORC2 promotes the serum-induced formation of stress-fibers or F-actin. Plays an essential role in embryonic growth and development. The polypeptide is Rapamycin-insensitive companion of mTOR (Mus musculus (Mouse)).